A 253-amino-acid polypeptide reads, in one-letter code: Triosephosphate isomerase (253 aa).

Substrate is bound at residue 9 to 11; the sequence is NWK. His96 acts as the Electrophile in catalysis. Glu169 functions as the Proton acceptor in the catalytic mechanism. Substrate is bound by residues Gly175, Ser215, and 236–237; that span reads GG.

The protein belongs to the triosephosphate isomerase family. In terms of assembly, homodimer.

The protein localises to the cytoplasm. It catalyses the reaction D-glyceraldehyde 3-phosphate = dihydroxyacetone phosphate. Its pathway is carbohydrate biosynthesis; gluconeogenesis. It participates in carbohydrate degradation; glycolysis; D-glyceraldehyde 3-phosphate from glycerone phosphate: step 1/1. Involved in the gluconeogenesis. Catalyzes stereospecifically the conversion of dihydroxyacetone phosphate (DHAP) to D-glyceraldehyde-3-phosphate (G3P). This Borrelia garinii subsp. bavariensis (strain ATCC BAA-2496 / DSM 23469 / PBi) (Borreliella bavariensis) protein is Triosephosphate isomerase.